A 212-amino-acid chain; its full sequence is ATP phosphoribosyltransferase (212 aa).

This sequence belongs to the ATP phosphoribosyltransferase family. Short subfamily. Heteromultimer composed of HisG and HisZ subunits.

It is found in the cytoplasm. It catalyses the reaction 1-(5-phospho-beta-D-ribosyl)-ATP + diphosphate = 5-phospho-alpha-D-ribose 1-diphosphate + ATP. The protein operates within amino-acid biosynthesis; L-histidine biosynthesis; L-histidine from 5-phospho-alpha-D-ribose 1-diphosphate: step 1/9. Its function is as follows. Catalyzes the condensation of ATP and 5-phosphoribose 1-diphosphate to form N'-(5'-phosphoribosyl)-ATP (PR-ATP). Has a crucial role in the pathway because the rate of histidine biosynthesis seems to be controlled primarily by regulation of HisG enzymatic activity. The sequence is that of ATP phosphoribosyltransferase from Prochlorococcus marinus (strain MIT 9515).